We begin with the raw amino-acid sequence, 214 residues long: Shikimate kinase (214 aa).

An ATP-binding site is contributed by 35 to 40 (GAGKST). S39 lines the Mg(2+) pocket. Substrate-binding residues include D57, R81, and G103. R141 is a binding site for ATP. Residue R160 coordinates substrate.

Belongs to the shikimate kinase family. Monomer. It depends on Mg(2+) as a cofactor.

It localises to the cytoplasm. It carries out the reaction shikimate + ATP = 3-phosphoshikimate + ADP + H(+). Its pathway is metabolic intermediate biosynthesis; chorismate biosynthesis; chorismate from D-erythrose 4-phosphate and phosphoenolpyruvate: step 5/7. Catalyzes the specific phosphorylation of the 3-hydroxyl group of shikimic acid using ATP as a cosubstrate. The protein is Shikimate kinase of Nitrobacter winogradskyi (strain ATCC 25391 / DSM 10237 / CIP 104748 / NCIMB 11846 / Nb-255).